The sequence spans 561 residues: NADH-quinone oxidoreductase subunit C/D (561 aa).

The segment at 1–152 (MLEKFSSKFN…YQVLYESDDL (152 aa)) is NADH dehydrogenase I subunit C. An NADH dehydrogenase I subunit D region spans residues 176–561 (KYTFLNIGPS…LNIIAGELDR (386 aa)).

In the N-terminal section; belongs to the complex I 30 kDa subunit family. It in the C-terminal section; belongs to the complex I 49 kDa subunit family. In terms of assembly, NDH-1 is composed of 13 different subunits. Subunits NuoB, CD, E, F, and G constitute the peripheral sector of the complex.

The protein localises to the cell inner membrane. The enzyme catalyses a quinone + NADH + 5 H(+)(in) = a quinol + NAD(+) + 4 H(+)(out). Its function is as follows. NDH-1 shuttles electrons from NADH, via FMN and iron-sulfur (Fe-S) centers, to quinones in the respiratory chain. The immediate electron acceptor for the enzyme in this species is believed to be ubiquinone. Couples the redox reaction to proton translocation (for every two electrons transferred, four hydrogen ions are translocated across the cytoplasmic membrane), and thus conserves the redox energy in a proton gradient. The polypeptide is NADH-quinone oxidoreductase subunit C/D (Campylobacter fetus subsp. fetus (strain 82-40)).